We begin with the raw amino-acid sequence, 364 residues long: Mannose-1-phosphate guanyltransferase (364 aa).

It belongs to the transferase hexapeptide repeat family.

It localises to the cytoplasm. It carries out the reaction alpha-D-mannose 1-phosphate + GTP + H(+) = GDP-alpha-D-mannose + diphosphate. Its pathway is nucleotide-sugar biosynthesis; GDP-alpha-D-mannose biosynthesis; GDP-alpha-D-mannose from alpha-D-mannose 1-phosphate (GTP route): step 1/1. In terms of biological role, involved in cell wall synthesis where it is required for glycosylation. Involved in cell cycle progression through cell-size checkpoint. The protein is Mannose-1-phosphate guanyltransferase (mpg1) of Emericella nidulans (strain FGSC A4 / ATCC 38163 / CBS 112.46 / NRRL 194 / M139) (Aspergillus nidulans).